The following is a 251-amino-acid chain: Insertion sequence IS5376 putative ATP-binding protein (251 aa).

G105–T112 provides a ligand contact to ATP.

This sequence belongs to the IS21/IS1162 putative ATP-binding protein family.

This Geobacillus stearothermophilus (Bacillus stearothermophilus) protein is Insertion sequence IS5376 putative ATP-binding protein.